A 1288-amino-acid chain; its full sequence is Peroxidasin homolog (1288 aa).

The signal sequence occupies residues 1–16 (MNLLLYLLLLVPWVLG). The 35-residue stretch at 17–51 (SEDGCPAKCTCDKKGFTVDCSNAGLTRIPKGISSN) folds into the LRRNT domain. LRR repeat units lie at residues 27–49 (CDKK…KGIS), 50–72 (SNVR…DLEG), 73–96 (FPLL…ILDH), 97–120 (LPEL…ASES), 122–143 (PLAS…WLLQ), 145–168 (FPEL…LFEN), and 204–227 (AYCT…LLKC). Residues 180 to 228 (NPWNCDCRVTKVKALLRKVEWERKAYCTNPVELRHQAIDEVEESLLKCA) form the LRRCT domain. Residue N247 is glycosylated (N-linked (GlcNAc...) asparagine). The tract at residues 304 to 323 (LRQSHHSNGAPQFTYKPRDN) is disordered. Ig-like C2-type domains follow at residues 314-400 (PQFT…FSLD) and 407-494 (PNIY…AKLT). Residues C335 and C384 are joined by a disulfide bond. LRR repeat units follow at residues 356–381 (SSRK…DSGR) and 387–412 (VNSL…IYEG). C428 and C478 are oxidised to a cystine. A glycan (N-linked (GlcNAc...) asparagine) is linked at N594. A disulfide bridge connects residues C624 and C640. Residue D718 participates in heme b binding. The Proton acceptor role is filled by H719. D720 is a binding site for Ca(2+). Disulfide bonds link C739–C749 and C743–C770. The N-linked (GlcNAc...) asparagine glycan is linked to N740. Residues T802, F804, D806, and S808 each coordinate Ca(2+). The N-linked (GlcNAc...) asparagine glycan is linked to N857. 2 residues coordinate heme b: E876 and H972. 2 LRR repeats span residues 998 to 1022 (KAFF…LFAS) and 1049 to 1073 (SLDL…EYRQ). 2 disulfide bridges follow: C1075/C1132 and C1173/C1200. The LRR 12 repeat unit spans residues 1168–1189 (LARLLCDNGDEIDRIQKDVFMY).

The protein belongs to the peroxidase family. XPO subfamily. The cofactor is Ca(2+). Requires heme b as cofactor.

Its subcellular location is the secreted. The protein resides in the extracellular space. It is found in the extracellular matrix. It carries out the reaction L-lysyl-[collagen] + L-methionyl-[collagen] + H2O2 = [collagen]-L-lysyl-N-S-L-methionyl-[collagen] + 2 H2O + H(+). It catalyses the reaction bromide + H2O2 = hypobromite + H2O. The enzyme catalyses L-lysyl-[collagen] + L-methionyl-[collagen] + hypobromite = [collagen]-L-lysyl-N-S-L-methionyl-[collagen] + bromide + H2O + H(+). The catalysed reaction is L-tyrosyl-[protein] + bromide + H2O2 + H(+) = 3-bromo-L-tyrosyl-[protein] + 2 H2O. It carries out the reaction hypobromite + L-tyrosyl-[protein] + H(+) = 3-bromo-L-tyrosyl-[protein] + H2O. Its function is as follows. Catalyzes the two-electron oxidation of bromide by hydrogen peroxide and generates hypobromite as a reactive intermediate which mediates the formation of sulfilimine cross-links between methionine and hydroxylysine residues within an uncross-linked collagen IV NC1 hexamer. Plays a role in the attachment of tissues and in axonal guidance during early developmental stages. May functionally antagonize the peroxidasin pxn-2 to maintain neuronal development. The chain is Peroxidasin homolog from Caenorhabditis briggsae.